A 138-amino-acid polypeptide reads, in one-letter code: Large ribosomal subunit protein uL16 (138 aa).

This sequence belongs to the universal ribosomal protein uL16 family. As to quaternary structure, part of the 50S ribosomal subunit.

In terms of biological role, binds 23S rRNA and is also seen to make contacts with the A and possibly P site tRNAs. In Acholeplasma laidlawii (strain PG-8A), this protein is Large ribosomal subunit protein uL16.